The sequence spans 239 residues: Protein LIFEGUARD 2 (239 aa).

The next 7 membrane-spanning stretches (helical) occupy residues 41-61 (LLVT…SVFF), 66-86 (AGFA…CPLY), 96-116 (YLLL…TCAF), 121-141 (VILE…LYTF), 156-176 (FLFG…LFPL), 179-199 (ISVM…IVYD), and 213-233 (IWAA…LLTL).

Belongs to the BI1 family. As to expression, expressed in seedlings, roots, leaves, inflorescences and flowers.

The protein localises to the membrane. Functionally, regulates the brassinosteroid (BR) signaling pathway that mediates cell elongation and organ morphogenesis. In terms of biological role, (Microbial infection) Facilitates the development of the powdery mildew fungus E.cruciferarum. Its function is as follows. (Microbial infection) May prevent cell death upon A.alternata f.sp. lycopersici (AAL) toxin treatment. This Arabidopsis thaliana (Mouse-ear cress) protein is Protein LIFEGUARD 2.